The following is a 182-amino-acid chain: NAD(P)H-quinone oxidoreductase subunit I, chloroplastic (182 aa).

4Fe-4S ferredoxin-type domains lie at Gly55–Lys84 and Leu95–Glu124. 8 residues coordinate [4Fe-4S] cluster: Cys64, Cys67, Cys70, Cys74, Cys104, Cys107, Cys110, and Cys114.

Belongs to the complex I 23 kDa subunit family. As to quaternary structure, NDH is composed of at least 16 different subunits, 5 of which are encoded in the nucleus. It depends on [4Fe-4S] cluster as a cofactor.

It is found in the plastid. Its subcellular location is the chloroplast thylakoid membrane. The enzyme catalyses a plastoquinone + NADH + (n+1) H(+)(in) = a plastoquinol + NAD(+) + n H(+)(out). The catalysed reaction is a plastoquinone + NADPH + (n+1) H(+)(in) = a plastoquinol + NADP(+) + n H(+)(out). Functionally, NDH shuttles electrons from NAD(P)H:plastoquinone, via FMN and iron-sulfur (Fe-S) centers, to quinones in the photosynthetic chain and possibly in a chloroplast respiratory chain. The immediate electron acceptor for the enzyme in this species is believed to be plastoquinone. Couples the redox reaction to proton translocation, and thus conserves the redox energy in a proton gradient. This chain is NAD(P)H-quinone oxidoreductase subunit I, chloroplastic, found in Buxus microphylla (Littleleaf boxwood).